The following is a 261-amino-acid chain: Cytochrome c oxidase subunit 3 (261 aa).

Over 1 to 15 the chain is Mitochondrial matrix; sequence MTHQTHAYHMVNPSP. Residues 16 to 34 traverse the membrane as a helical segment; the sequence is WPLTGALSALLMTSGLIMW. At 35-40 the chain is on the mitochondrial intermembrane side; it reads FHFNST. Residues 41–66 traverse the membrane as a helical segment; the sequence is TLLMLGLTTNMLTMYQWWRDVVREST. At 67-72 the chain is on the mitochondrial matrix side; it reads FQGHHT. A helical transmembrane segment spans residues 73-105; the sequence is PNVQKGLRYGMILFIISEVLFFTGFFWAFYHSS. Residues 106-128 are Mitochondrial intermembrane-facing; the sequence is LAPTPELGGCWPPTGIHPLNPLE. The chain crosses the membrane as a helical span at residues 129 to 152; the sequence is VPLLNTSVLLASGVSITWAHHSLM. Residues 153–155 lie on the Mitochondrial matrix side of the membrane; that stretch reads EGN. A helical transmembrane segment spans residues 156–183; the sequence is RNHMLQALFITIALGVYFTLLQASEYYE. Residues 184–190 are Mitochondrial intermembrane-facing; it reads APFTISD. A helical membrane pass occupies residues 191 to 223; it reads GVYGSTFFVATGFHGLHVIIGSTFLIVCFFRQL. Over 224 to 232 the chain is Mitochondrial matrix; it reads KFHFTSNHH. A helical transmembrane segment spans residues 233 to 256; the sequence is FGFEAAAWYWHFVDVVWLFLYVSI. Residues 257-261 are Mitochondrial intermembrane-facing; sequence YWWGS.

Belongs to the cytochrome c oxidase subunit 3 family. Component of the cytochrome c oxidase (complex IV, CIV), a multisubunit enzyme composed of 14 subunits. The complex is composed of a catalytic core of 3 subunits MT-CO1, MT-CO2 and MT-CO3, encoded in the mitochondrial DNA, and 11 supernumerary subunits COX4I, COX5A, COX5B, COX6A, COX6B, COX6C, COX7A, COX7B, COX7C, COX8 and NDUFA4, which are encoded in the nuclear genome. The complex exists as a monomer or a dimer and forms supercomplexes (SCs) in the inner mitochondrial membrane with NADH-ubiquinone oxidoreductase (complex I, CI) and ubiquinol-cytochrome c oxidoreductase (cytochrome b-c1 complex, complex III, CIII), resulting in different assemblies (supercomplex SCI(1)III(2)IV(1) and megacomplex MCI(2)III(2)IV(2)).

Its subcellular location is the mitochondrion inner membrane. The catalysed reaction is 4 Fe(II)-[cytochrome c] + O2 + 8 H(+)(in) = 4 Fe(III)-[cytochrome c] + 2 H2O + 4 H(+)(out). Its function is as follows. Component of the cytochrome c oxidase, the last enzyme in the mitochondrial electron transport chain which drives oxidative phosphorylation. The respiratory chain contains 3 multisubunit complexes succinate dehydrogenase (complex II, CII), ubiquinol-cytochrome c oxidoreductase (cytochrome b-c1 complex, complex III, CIII) and cytochrome c oxidase (complex IV, CIV), that cooperate to transfer electrons derived from NADH and succinate to molecular oxygen, creating an electrochemical gradient over the inner membrane that drives transmembrane transport and the ATP synthase. Cytochrome c oxidase is the component of the respiratory chain that catalyzes the reduction of oxygen to water. Electrons originating from reduced cytochrome c in the intermembrane space (IMS) are transferred via the dinuclear copper A center (CU(A)) of subunit 2 and heme A of subunit 1 to the active site in subunit 1, a binuclear center (BNC) formed by heme A3 and copper B (CU(B)). The BNC reduces molecular oxygen to 2 water molecules using 4 electrons from cytochrome c in the IMS and 4 protons from the mitochondrial matrix. In Gazella cuvieri (Cuvier's gazelle), this protein is Cytochrome c oxidase subunit 3 (MT-CO3).